Here is a 259-residue protein sequence, read N- to C-terminus: Putative deoxyribonuclease TATDN1 homolog (259 aa).

4 residues coordinate a divalent metal cation: Glu82, His116, His138, and Asp186.

The protein belongs to the metallo-dependent hydrolases superfamily. TatD-type hydrolase family. It depends on a divalent metal cation as a cofactor.

It localises to the nucleus. Putative deoxyribonuclease. The protein is Putative deoxyribonuclease TATDN1 homolog of Vairimorpha ceranae (strain BRL01) (Microsporidian parasite).